A 741-amino-acid chain; its full sequence is Transcription activator of gluconeogenesis BDBG_05438 (741 aa).

Positions 1 to 70 (MTASTRNGSP…NAKDPLRPRR (70 aa)) are disordered. Residues 25 to 61 (KSMTTTPANPPETKSQTNGKGSGTAQSSQKPASTSAN) show a composition bias toward polar residues. The zn(2)-C6 fungal-type DNA-binding region spans 77-105 (CFACQRAHLTCGDERPCQRCIKRGLQDAC). Disordered regions lie at residues 135–163 (QANTTRNIPNQRGNASNSNSNKVSRQSVS), 202–239 (SVFHAQSPSSTQNFDLSSNPQTQNLSSAMSQTASSVSG), 285–321 (GAGDTPPSDSATQRGSIGRSSGTFTAQNFGDSANNQS), 401–421 (TNLMHPTNTPQQSRISTPGLK), 559–590 (GSSLSSASSVRGSSTFTPRNNNTHNSIDPHTG), and 655–741 (FHGK…AKRG). Residues 202–226 (SVFHAQSPSSTQNFDLSSNPQTQNL) are compositionally biased toward polar residues. Over residues 227 to 238 (SSAMSQTASSVS) the composition is skewed to low complexity. Polar residues-rich tracts occupy residues 291–321 (PSDSATQRGSIGRSSGTFTAQNFGDSANNQS) and 401–416 (TNLMHPTNTPQQSRIS). Over residues 560–572 (SSLSSASSVRGSS) the composition is skewed to low complexity. Residues 573 to 586 (TFTPRNNNTHNSID) show a composition bias toward polar residues. The segment covering 672–718 (TGTTTSGDVATTTATGTSTSNGANANTNGNNTNPNDPSTAASSSASS) has biased composition (low complexity). The span at 723–732 (RSNHLGKRGG) shows a compositional bias: basic residues.

The protein belongs to the ERT1/acuK family.

It localises to the nucleus. Its function is as follows. Transcription factor which regulates nonfermentable carbon utilization. Activator of gluconeogenetic genes. The protein is Transcription activator of gluconeogenesis BDBG_05438 of Blastomyces gilchristii (strain SLH14081) (Blastomyces dermatitidis).